The primary structure comprises 146 residues: Hemoglobin subunit beta (146 aa).

Residues 2-146 (QWTAEEKQLI…VAHALARKYH (145 aa)) form the Globin domain. Heme b-binding residues include histidine 63 and histidine 92.

The protein belongs to the globin family. In terms of assembly, heterotetramer of two alpha chains and two beta chains. As to expression, red blood cells.

Involved in oxygen transport from the lung to the various peripheral tissues. The protein is Hemoglobin subunit beta (HBB) of Turdus merula (Common blackbird).